A 1341-amino-acid polypeptide reads, in one-letter code: Restriction of telomere capping protein 1 (1341 aa).

Positions 1–39 (MSLSPHVENASIPKGSTPIPKNRNVSSIGKGEFLGSSSS) are disordered. 6 WD repeats span residues 207–248 (NKFS…SIDN), 256–296 (EHTR…SKSS), 305–342 (TASD…YKFA), 367–406 (AHTG…NAAE), 439–486 (NTGY…IPKH), and 489–527 (LSET…TVLE). Disordered regions lie at residues 559–593 (PELQ…IGGI), 600–619 (TGLT…GPTF), 630–651 (ASSF…ENRE), 736–765 (KNAT…DDDD), and 789–830 (NEKV…DRAR). Residues 630–644 (ASSFNSSSASLTSLT) show a composition bias toward low complexity. Residues 753–765 (DDGDDDDDDDDDD) show a composition bias toward acidic residues. Low complexity predominate over residues 814–823 (SSISSISASR). The WD 7 repeat unit spans residues 843–883 (KIQTLVDLISIATHNASVYLSIDDLTNFKIWILIRDSLLWD). Disordered stretches follow at residues 941–962 (AFRA…KLKE) and 1013–1043 (DEHE…KSIP). Composition is skewed to basic and acidic residues over residues 951-962 (DAEKKPVSKLKE) and 1015-1027 (HEHQ…HDSP). A phosphoserine mark is found at S1036, S1080, S1087, S1089, S1123, and S1133. WD repeat units follow at residues 1129–1169 (SRPD…KQLY) and 1216–1255 (LFGI…LITN). The RING-type; degenerate zinc finger occupies 1293–1335 (CVLCERPLKKLTMVILPCGHEGHFQCIQEWFLDENEQECPGGC).

It belongs to the WD repeat RTC1 family. In terms of assembly, component of the SEA complex composed of at least IML1/SEA1, RTC1/SEA2, MTC5/SEA3, NPR2, NPR3, SEA4, SEC13 and SEH1. Interacts with ribosomes.

The protein localises to the vacuole membrane. In terms of biological role, component of the SEA complex which coats the vacuolar membrane and is involved in intracellular trafficking, autophagy, response to nitrogen starvation, and amino acid biogenesis. May be involved in a process influencing telomere capping. This chain is Restriction of telomere capping protein 1 (RTC1), found in Saccharomyces cerevisiae (strain ATCC 204508 / S288c) (Baker's yeast).